Here is a 274-residue protein sequence, read N- to C-terminus: Dermonecrotic toxin LcsSicTox-betaIC1 (274 aa).

Histidine 5 is a catalytic residue. Mg(2+)-binding residues include glutamate 25 and aspartate 27. Catalysis depends on histidine 41, which acts as the Nucleophile. 2 cysteine pairs are disulfide-bonded: cysteine 45/cysteine 51 and cysteine 47/cysteine 190. A glycan (N-linked (GlcNAc...) asparagine) is linked at asparagine 66. Aspartate 85 contributes to the Mg(2+) binding site.

The protein belongs to the arthropod phospholipase D family. Class II subfamily. Mg(2+) serves as cofactor. In terms of tissue distribution, expressed by the venom gland.

The protein localises to the secreted. It carries out the reaction an N-(acyl)-sphingosylphosphocholine = an N-(acyl)-sphingosyl-1,3-cyclic phosphate + choline. It catalyses the reaction an N-(acyl)-sphingosylphosphoethanolamine = an N-(acyl)-sphingosyl-1,3-cyclic phosphate + ethanolamine. The enzyme catalyses a 1-acyl-sn-glycero-3-phosphocholine = a 1-acyl-sn-glycero-2,3-cyclic phosphate + choline. The catalysed reaction is a 1-acyl-sn-glycero-3-phosphoethanolamine = a 1-acyl-sn-glycero-2,3-cyclic phosphate + ethanolamine. In terms of biological role, dermonecrotic toxins cleave the phosphodiester linkage between the phosphate and headgroup of certain phospholipids (sphingolipid and lysolipid substrates), forming an alcohol (often choline) and a cyclic phosphate. This toxin acts on sphingomyelin (SM). It may also act on ceramide phosphoethanolamine (CPE), lysophosphatidylcholine (LPC) and lysophosphatidylethanolamine (LPE), but not on lysophosphatidylserine (LPS), and lysophosphatidylglycerol (LPG). It acts by transphosphatidylation, releasing exclusively cyclic phosphate products as second products. Induces dermonecrosis, hemolysis, increased vascular permeability, edema, inflammatory response, and platelet aggregation. In Loxosceles cf. spinulosa (strain GJB-2008) (Recluse spider), this protein is Dermonecrotic toxin LcsSicTox-betaIC1.